The following is a 204-amino-acid chain: N-(5'-phosphoribosyl)anthranilate isomerase (204 aa).

This sequence belongs to the TrpF family.

It carries out the reaction N-(5-phospho-beta-D-ribosyl)anthranilate = 1-(2-carboxyphenylamino)-1-deoxy-D-ribulose 5-phosphate. Its pathway is amino-acid biosynthesis; L-tryptophan biosynthesis; L-tryptophan from chorismate: step 3/5. The chain is N-(5'-phosphoribosyl)anthranilate isomerase from Syntrophomonas wolfei subsp. wolfei (strain DSM 2245B / Goettingen).